The primary structure comprises 153 residues: Fucose mutarotase (153 aa).

Histidine 24 (proton donor) is an active-site residue. Substrate is bound at residue aspartate 32. Aspartate 69 is an active-site residue. Substrate-binding residues include methionine 79, tyrosine 119, tyrosine 137, and asparagine 139. Residue tyrosine 119 is part of the active site.

The protein belongs to the RbsD / FucU family. In terms of assembly, mainly homodimer, but also exists as homotetramer, homooctamer, and homodecamer. The homodimeric form seems catalytically inactive.

It catalyses the reaction alpha-L-fucose = beta-L-fucose. It participates in carbohydrate metabolism; L-fucose metabolism. Involved in the interconversion between alpha- and beta-L-fucoses. L-Fucose (6-deoxy-L-galactose) exists as alpha-L-fucose (29.5%) and beta-L-fucose (70.5%), the beta-form is metabolized through the salvage pathway. GDP-L-fucose formed either by the de novo or salvage pathways is transported into the endoplasmic reticulum, where it serves as a substrate for N- and O-glycosylations by fucosyltransferases. Fucosylated structures expressed on cell surfaces or secreted in biological fluids are believed to play a critical role in cell-cell adhesion and recognition processes. The chain is Fucose mutarotase (FUOM) from Bos taurus (Bovine).